Here is a 339-residue protein sequence, read N- to C-terminus: Protein H339R (339 aa).

Belongs to the asfivirus H339R family. Interacts with host NACA (alpha chain of nascent polypeptide-associated complex).

The protein localises to the host cytoplasm. It is found in the host nucleus. The protein is Protein H339R of African swine fever virus (isolate Tick/Malawi/Lil 20-1/1983) (ASFV).